Consider the following 89-residue polypeptide: Putative protein T-ENOL (89 aa).

Disordered regions lie at residues 1-31 (MAST…KASL) and 54-89 (RSHM…TDTR).

As to expression, specifically expressed in testis (at protein level).

This Rattus norvegicus (Rat) protein is Putative protein T-ENOL.